We begin with the raw amino-acid sequence, 406 residues long: Tryptophan 2,3-dioxygenase (406 aa).

Substrate is bound by residues 72–76 and arginine 144; that span reads FIVTH. Histidine 328 serves as a coordination point for heme. Position 342 (threonine 342) interacts with substrate.

Belongs to the tryptophan 2,3-dioxygenase family. In terms of assembly, homotetramer. Dimer of dimers. Requires heme as cofactor.

The catalysed reaction is L-tryptophan + O2 = N-formyl-L-kynurenine. It functions in the pathway amino-acid degradation; L-tryptophan degradation via kynurenine pathway; L-kynurenine from L-tryptophan: step 1/2. Functionally, heme-dependent dioxygenase that catalyzes the oxidative cleavage of the L-tryptophan (L-Trp) pyrrole ring and converts L-tryptophan to N-formyl-L-kynurenine. Catalyzes the oxidative cleavage of the indole moiety. The polypeptide is Tryptophan 2,3-dioxygenase (Xenopus laevis (African clawed frog)).